Here is a 221-residue protein sequence, read N- to C-terminus: Urease accessory protein UreF (221 aa).

It belongs to the UreF family. UreD, UreF and UreG form a complex that acts as a GTP-hydrolysis-dependent molecular chaperone, activating the urease apoprotein by helping to assemble the nickel containing metallocenter of UreC. The UreE protein probably delivers the nickel.

It is found in the cytoplasm. Its function is as follows. Required for maturation of urease via the functional incorporation of the urease nickel metallocenter. In Teredinibacter turnerae (strain ATCC 39867 / T7901), this protein is Urease accessory protein UreF.